The primary structure comprises 459 residues: Asperlicin C monooxygenase (459 aa).

Residues Asp49, Ala62, and Arg121 each coordinate FAD. Arg199 is a catalytic residue. FAD contacts are provided by Asp323 and Ala336.

Belongs to the paxM FAD-dependent monooxygenase family. The cofactor is FAD.

It catalyses the reaction asperlicin C + NADPH + O2 + H(+) = asperlicin E + NADP(+) + H2O. The enzyme catalyses asperlicin C + NADH + O2 + H(+) = asperlicin E + NAD(+) + H2O. Its function is as follows. Catalyzes the conversion of asperlicin A to form asperlicin E, a potent cholecystokinin receptor CCK(A) antagonist. This is Asperlicin C monooxygenase from Petromyces alliaceus (Aspergillus alliaceus).